The following is a 516-amino-acid chain: Extracellular endo-inulinase inuA (516 aa).

Residues 1 to 25 (MLNPKVAYMVWMTCLGLMLPSQAQS) form the signal peptide. Residues 40-43 (WMNE), Gln-59, Trp-67, and 99-100 (FT) each bind substrate. Glu-43 is an active-site residue. Residue Asn-109 is glycosylated (N-linked (GlcNAc...) asparagine). 175–176 (RD) lines the substrate pocket. The N-linked (GlcNAc...) asparagine glycan is linked to Asn-210. Glu-233 provides a ligand contact to substrate. N-linked (GlcNAc...) asparagine glycosylation is found at Asn-372 and Asn-419.

It belongs to the glycosyl hydrolase 32 family.

It localises to the secreted. The enzyme catalyses Endohydrolysis of (2-&gt;1)-beta-D-fructosidic linkages in inulin.. Activity is stimulated by Mn(2+), Fe(2+) Ca(2+) metal ions and DTT; and inhibited by glucose, Mg(2+), Zn(2+), Cu(2+), Hg(2+), Al(3+), and Fe(3+). In terms of biological role, endo-inulinase involved in utilization of the plant storage polymer inulin, consisting of fructooligosaccharides with a degree of polymerization (DP) value from 2 to 60. The sequence is that of Extracellular endo-inulinase inuA (inuA) from Aspergillus niger.